A 405-amino-acid chain; its full sequence is CMP-sialic acid transporter 4 (405 aa).

Over 1–43 (MQRNGVMECSVCHSKVVAPSPRSVSRAYDKHRSKISSKYRALN) the chain is Cytoplasmic. The helical transmembrane segment at 44–64 (FLLVSGDCILVGLQPILVFMS) threads the bilayer. Topologically, residues 65–74 (KVDGKFQFSP) are lumenal. A helical transmembrane segment spans residues 75–95 (ISVNFLTEVTKVIFAIVMLII). The Cytoplasmic portion of the chain corresponds to 96–121 (QSRKQKVGEKPLLSLSTFVQAARNNA). The chain crosses the membrane as a helical span at residues 122-142 (LLAVPALLYAINNYLKFIMQL). A topological domain (lumenal) is located at residue Tyr143. Residues 144 to 164 (FSPATVKMLSNLKVLVIAILL) traverse the membrane as a helical segment. Topologically, residues 165 to 171 (KFIMRRK) are cytoplasmic. The chain crosses the membrane as a helical span at residues 172–192 (FSIIQWEALALLLIGISVNQL). Over 193 to 203 (SSIPDGTKSFG) the chain is Lumenal. The chain crosses the membrane as a helical span at residues 204–224 (LAVTTIAYIYTLIFVTVPSLA). The Cytoplasmic portion of the chain corresponds to 225-244 (SVYNEYALKSQFDTSIYLQN). A helical membrane pass occupies residues 245-265 (LFLYGYGAIFNFLGILGTVIF). Topologically, residues 266–281 (QGPESFDILQGHSRAT) are lumenal. Residues 282–302 (MFLICNNAAQGILSSFFFKYA) form a helical membrane-spanning segment. At 303–322 (DTILKKYSSTVATIFTGLAS) the chain is on the cytoplasmic side. The chain crosses the membrane as a helical span at residues 323–343 (AAFLGHTLTVNFLLGISIVFI). At 344-405 (SMHQFFSPLA…TDERKPLLPI (62 aa)) the chain is on the lumenal side. Residues 386 to 405 (AADDASHLTSTDERKPLLPI) are disordered. A compositionally biased stretch (basic and acidic residues) spans 389 to 405 (DASHLTSTDERKPLLPI).

Belongs to the nucleotide-sugar transporter family. CMP-Sialate:CMP antiporter (TC 2.A.7.12) subfamily.

It localises to the golgi apparatus membrane. In terms of biological role, sugar transporter involved in the transport of CMP-sialic acid from the cytoplasm into the Golgi. May transport important nucleotide sugars such as CMP-Kdo (2-keto-3-deoxy-D-manno-octulosonic acid) in physiological conditions. This chain is CMP-sialic acid transporter 4, found in Oryza sativa subsp. indica (Rice).